A 138-amino-acid polypeptide reads, in one-letter code: DASH complex subunit DAD2 (138 aa).

Polar residues predominate over residues 1-14 (MSGFSSRPLSTHLR). Disordered stretches follow at residues 1-25 (MSGF…QGQS) and 116-138 (PTEH…SGRG).

Belongs to the DASH complex DAD2 family. As to quaternary structure, component of the DASH complex consisting of ASK1, DAD1, DAD2, DAD3, DAD4, DAM1, DUO1, HSK3, SPC19 and SPC34, with a stoichiometry of one copy of each subunit per complex. Multiple DASH complexes oligomerize to form a ring that encircles spindle microtubules and organizes the rod-like NDC80 complexes of the outer kinetochore. DASH complex oligomerization strengthens microtubule attachments. On cytoplasmic microtubules, DASH complexes appear to form patches instead of rings.

It localises to the chromosome. Its subcellular location is the centromere. It is found in the kinetochore. The protein resides in the cytoplasm. The protein localises to the cytoskeleton. It localises to the spindle. Its subcellular location is the nucleus. Functionally, component of the DASH complex that connects microtubules with kinetochores and couples microtubule depolymerisation to chromosome movement; it is involved in retrieving kinetochores to the spindle poles before their re-orientation on the spindle in early mitosis and allows microtubule depolymerization to pull chromosomes apart and resist detachment during anaphase. Kinetochores, consisting of a centromere-associated inner segment and a microtubule-contacting outer segment, play a crucial role in chromosome segregation by mediating the physical connection between centromeric DNA and microtubules. Kinetochores also serve as an input point for the spindle assembly checkpoint, which delays anaphase until all chromosomes have bioriented on the mitotic spindle. The sequence is that of DASH complex subunit DAD2 from Chaetomium thermophilum (strain DSM 1495 / CBS 144.50 / IMI 039719) (Thermochaetoides thermophila).